Consider the following 429-residue polypeptide: Bifunctional protein GlmU (429 aa).

The segment at 1–223 (MKTSILILAA…EDEFMGINDK (223 aa)) is pyrophosphorylase. UDP-N-acetyl-alpha-D-glucosamine contacts are provided by residues 8 to 11 (LAAG), Lys22, and 81 to 82 (GT). Asp102 provides a ligand contact to Mg(2+). The UDP-N-acetyl-alpha-D-glucosamine site is built by Gly135, Glu149, Asn164, and Asn221. Asn221 is a Mg(2+) binding site. Residues 224–244 (FELSIAENFMQEKIKKYWMQQ) form a linker region. Positions 245–429 (GVIFHLPQST…KDYYYKKFQK (185 aa)) are N-acetyltransferase. Residues Arg308 and Lys325 each contribute to the UDP-N-acetyl-alpha-D-glucosamine site. His336 acts as the Proton acceptor in catalysis. Positions 339 and 350 each coordinate UDP-N-acetyl-alpha-D-glucosamine. Residues 359–360 (NY), Ser378, Ala396, and Arg413 each bind acetyl-CoA.

It in the N-terminal section; belongs to the N-acetylglucosamine-1-phosphate uridyltransferase family. In the C-terminal section; belongs to the transferase hexapeptide repeat family. As to quaternary structure, homotrimer. It depends on Mg(2+) as a cofactor.

The protein localises to the cytoplasm. It catalyses the reaction alpha-D-glucosamine 1-phosphate + acetyl-CoA = N-acetyl-alpha-D-glucosamine 1-phosphate + CoA + H(+). The catalysed reaction is N-acetyl-alpha-D-glucosamine 1-phosphate + UTP + H(+) = UDP-N-acetyl-alpha-D-glucosamine + diphosphate. The protein operates within nucleotide-sugar biosynthesis; UDP-N-acetyl-alpha-D-glucosamine biosynthesis; N-acetyl-alpha-D-glucosamine 1-phosphate from alpha-D-glucosamine 6-phosphate (route II): step 2/2. It participates in nucleotide-sugar biosynthesis; UDP-N-acetyl-alpha-D-glucosamine biosynthesis; UDP-N-acetyl-alpha-D-glucosamine from N-acetyl-alpha-D-glucosamine 1-phosphate: step 1/1. Its pathway is bacterial outer membrane biogenesis; LPS lipid A biosynthesis. Its function is as follows. Catalyzes the last two sequential reactions in the de novo biosynthetic pathway for UDP-N-acetylglucosamine (UDP-GlcNAc). The C-terminal domain catalyzes the transfer of acetyl group from acetyl coenzyme A to glucosamine-1-phosphate (GlcN-1-P) to produce N-acetylglucosamine-1-phosphate (GlcNAc-1-P), which is converted into UDP-GlcNAc by the transfer of uridine 5-monophosphate (from uridine 5-triphosphate), a reaction catalyzed by the N-terminal domain. This chain is Bifunctional protein GlmU, found in Campylobacter jejuni (strain RM1221).